Reading from the N-terminus, the 109-residue chain is Phosphoribosyl-ATP pyrophosphatase (109 aa).

The protein belongs to the PRA-PH family.

It is found in the cytoplasm. It carries out the reaction 1-(5-phospho-beta-D-ribosyl)-ATP + H2O = 1-(5-phospho-beta-D-ribosyl)-5'-AMP + diphosphate + H(+). It participates in amino-acid biosynthesis; L-histidine biosynthesis; L-histidine from 5-phospho-alpha-D-ribose 1-diphosphate: step 2/9. This is Phosphoribosyl-ATP pyrophosphatase from Paramagnetospirillum magneticum (strain ATCC 700264 / AMB-1) (Magnetospirillum magneticum).